Reading from the N-terminus, the 206-residue chain is Large ribosomal subunit protein uL4 (206 aa).

The disordered stretch occupies residues 45–75 (RQGTHSTKTRGEVRGGGRKPWRQKGTGRARQ). Residues 60 to 71 (GGRKPWRQKGTG) show a composition bias toward basic residues.

Belongs to the universal ribosomal protein uL4 family. In terms of assembly, part of the 50S ribosomal subunit.

Functionally, one of the primary rRNA binding proteins, this protein initially binds near the 5'-end of the 23S rRNA. It is important during the early stages of 50S assembly. It makes multiple contacts with different domains of the 23S rRNA in the assembled 50S subunit and ribosome. In terms of biological role, forms part of the polypeptide exit tunnel. In Thermoanaerobacter pseudethanolicus (strain ATCC 33223 / 39E) (Clostridium thermohydrosulfuricum), this protein is Large ribosomal subunit protein uL4.